Here is a 306-residue protein sequence, read N- to C-terminus: Ribosomal RNA small subunit methyltransferase H (306 aa).

Residues 37-39 (GGH), aspartate 56, aspartate 102, and glutamine 109 contribute to the S-adenosyl-L-methionine site.

Belongs to the methyltransferase superfamily. RsmH family.

Its subcellular location is the cytoplasm. It catalyses the reaction cytidine(1402) in 16S rRNA + S-adenosyl-L-methionine = N(4)-methylcytidine(1402) in 16S rRNA + S-adenosyl-L-homocysteine + H(+). Specifically methylates the N4 position of cytidine in position 1402 (C1402) of 16S rRNA. The polypeptide is Ribosomal RNA small subunit methyltransferase H (Nautilia profundicola (strain ATCC BAA-1463 / DSM 18972 / AmH)).